Here is a 675-residue protein sequence, read N- to C-terminus: DNA gyrase subunit B (675 aa).

Residues 453 to 567 form the Toprim domain; sequence SELYVVEGDS…NGHVFLAQPP (115 aa). Residues E459, D532, and D534 each contribute to the Mg(2+) site.

The protein belongs to the type II topoisomerase GyrB family. As to quaternary structure, heterotetramer, composed of two GyrA and two GyrB chains. In the heterotetramer, GyrA contains the active site tyrosine that forms a transient covalent intermediate with DNA, while GyrB binds cofactors and catalyzes ATP hydrolysis. It depends on Mg(2+) as a cofactor. Requires Mn(2+) as cofactor. The cofactor is Ca(2+).

The protein localises to the cytoplasm. It catalyses the reaction ATP-dependent breakage, passage and rejoining of double-stranded DNA.. Functionally, a type II topoisomerase that negatively supercoils closed circular double-stranded (ds) DNA in an ATP-dependent manner to modulate DNA topology and maintain chromosomes in an underwound state. Negative supercoiling favors strand separation, and DNA replication, transcription, recombination and repair, all of which involve strand separation. Also able to catalyze the interconversion of other topological isomers of dsDNA rings, including catenanes and knotted rings. Type II topoisomerases break and join 2 DNA strands simultaneously in an ATP-dependent manner. This Mycobacterium tuberculosis (strain ATCC 25177 / H37Ra) protein is DNA gyrase subunit B.